The primary structure comprises 518 residues: Golgi-associated olfactory signaling regulator (518 aa).

The N-terminal stretch at 1–19 (MKSFSRILFLVFLLAGLRS) is a signal peptide. Residues 20-409 (KAAPSAPLPL…GRPRGAAGGA (390 aa)) lie on the Extracellular side of the membrane. The interval 38–377 (HPSETSPLKG…ATLRAPQRHS (340 aa)) is disordered. Residues 92-106 (DLRETPHPESPETPK) show a composition bias toward basic and acidic residues. N124 carries an N-linked (GlcNAc...) asparagine glycan. Over residues 138-153 (TPGPTEMPHPGSPETP) the composition is skewed to pro residues. The N-linked (GlcNAc...) asparagine glycan is linked to N156. Composition is skewed to polar residues over residues 168-180 (TPNT…TPQE) and 187-207 (LNAT…NPTK). Residues N188 and N220 are each glycosylated (N-linked (GlcNAc...) asparagine). Composition is skewed to basic and acidic residues over residues 209-220 (PDPKSPEKHDLN) and 236-247 (DPSKTPHPESHV). Composition is skewed to polar residues over residues 248–270 (THNP…QNAT) and 276–285 (SDPQISTSLY). A glycan (N-linked (GlcNAc...) asparagine) is linked at N268. A helical transmembrane segment spans residues 410-430 (LCLFFAGTALLIGIFVLLWCL). Topologically, residues 431 to 518 (YRRAARQRPF…SPATLPNNFV (88 aa)) are cytoplasmic. The interval 477 to 518 (HIATKQPPPTPPLPPKLPPPPRGGRPQRLEALSPATLPNNFV) is disordered. Pro residues predominate over residues 482–499 (QPPPTPPLPPKLPPPPRG).

It is found in the golgi apparatus membrane. In terms of biological role, required for proper function of the olfactory system. May be involved in establishing the acuity of olfactory sensory signaling. The sequence is that of Golgi-associated olfactory signaling regulator (GFY) from Homo sapiens (Human).